The following is a 514-amino-acid chain: MQPYLQLASLRLATTIPLAPRLYDANLLAASGAAMASSMAYIALLCAALAAVVALLRWAYRWSHPRSNGRLPPGSLGLPVIGETLQFFAPNPTCDLSPFVKERIKRYGSIFKTSVVGRPVVVSADPEMNYYVFQQEGKLFESWYPDTFTEIFGRDNVGSLHGFMYKYLKTLVLRLYGQENLKSVLLAETDAACRGSLASWASQPSVELKEGISTMIFDLTAKKLIGYDPSKPSQVNLRKNFGAFICGLISFPLNIPGTAYHECMEGRKNAMKVLRGMMKERMAEPERPCEDFFDHVIQELRREKPLLTETIALDLMFVLLFASFETTALALTIGVKLLTENPKVVDALREEHEAIIRNRKDPNSGVTWAEYKSMTFTSQVIMEIVRLANIVPGIFRKALQDVEIKGYTIPAGWGIMVCPPAVHLNPEIYEDPLAFNPWRWQGKPEITGGTKHFMAFGGGLRFCVGTDLSKVLMATFIHSLVTKYSWRTVKGGNIVRTPGLSFPDGFHIQLFPKN.

2 helical membrane-spanning segments follow: residues 36 to 56 (ASSM…VALL) and 315 to 335 (LMFV…TIGV). Cys-463 is a binding site for heme.

This sequence belongs to the cytochrome P450 family. It depends on heme as a cofactor. As to expression, expressed in roots and coleoptiles, but not in leaves.

The protein localises to the cytoplasmic vesicle membrane. The polypeptide is Cytochrome P450 87A3 (CYP87A3) (Oryza sativa subsp. japonica (Rice)).